The primary structure comprises 227 residues: Cytochrome c oxidase subunit 2 (227 aa).

The Mitochondrial intermembrane portion of the chain corresponds to 1 to 14; it reads MAYPLQLGFQDAVS. Residues 15 to 45 form a helical membrane-spanning segment; sequence PIMEELLYFHDHTLMIVFLISSLVLYIITLM. At 46 to 59 the chain is on the mitochondrial matrix side; that stretch reads LTTKLTHTNTMNAQ. The chain crosses the membrane as a helical span at residues 60 to 87; sequence EVETVWTILPAIILILIALPSLRILYMM. Residues 88–227 lie on the Mitochondrial intermembrane side of the membrane; that stretch reads DEINNPSLTV…TFEKWTASLL (140 aa). Cu cation is bound by residues histidine 161, cysteine 196, glutamate 198, cysteine 200, histidine 204, and methionine 207. Position 198 (glutamate 198) interacts with Mg(2+).

It belongs to the cytochrome c oxidase subunit 2 family. As to quaternary structure, component of the cytochrome c oxidase (complex IV, CIV), a multisubunit enzyme composed of 14 subunits. The complex is composed of a catalytic core of 3 subunits MT-CO1, MT-CO2 and MT-CO3, encoded in the mitochondrial DNA, and 11 supernumerary subunits COX4I, COX5A, COX5B, COX6A, COX6B, COX6C, COX7A, COX7B, COX7C, COX8 and NDUFA4, which are encoded in the nuclear genome. The complex exists as a monomer or a dimer and forms supercomplexes (SCs) in the inner mitochondrial membrane with NADH-ubiquinone oxidoreductase (complex I, CI) and ubiquinol-cytochrome c oxidoreductase (cytochrome b-c1 complex, complex III, CIII), resulting in different assemblies (supercomplex SCI(1)III(2)IV(1) and megacomplex MCI(2)III(2)IV(2)). Found in a complex with TMEM177, COA6, COX18, COX20, SCO1 and SCO2. Interacts with TMEM177 in a COX20-dependent manner. Interacts with COX20. Interacts with COX16. Cu cation serves as cofactor.

The protein localises to the mitochondrion inner membrane. The enzyme catalyses 4 Fe(II)-[cytochrome c] + O2 + 8 H(+)(in) = 4 Fe(III)-[cytochrome c] + 2 H2O + 4 H(+)(out). Functionally, component of the cytochrome c oxidase, the last enzyme in the mitochondrial electron transport chain which drives oxidative phosphorylation. The respiratory chain contains 3 multisubunit complexes succinate dehydrogenase (complex II, CII), ubiquinol-cytochrome c oxidoreductase (cytochrome b-c1 complex, complex III, CIII) and cytochrome c oxidase (complex IV, CIV), that cooperate to transfer electrons derived from NADH and succinate to molecular oxygen, creating an electrochemical gradient over the inner membrane that drives transmembrane transport and the ATP synthase. Cytochrome c oxidase is the component of the respiratory chain that catalyzes the reduction of oxygen to water. Electrons originating from reduced cytochrome c in the intermembrane space (IMS) are transferred via the dinuclear copper A center (CU(A)) of subunit 2 and heme A of subunit 1 to the active site in subunit 1, a binuclear center (BNC) formed by heme A3 and copper B (CU(B)). The BNC reduces molecular oxygen to 2 water molecules using 4 electrons from cytochrome c in the IMS and 4 protons from the mitochondrial matrix. The protein is Cytochrome c oxidase subunit 2 (MT-CO2) of Hippopotamus amphibius (Hippopotamus).